Reading from the N-terminus, the 407-residue chain is Ornithine cyclodeaminase (407 aa).

Positions 233, 234, 312, 344, 345, 346, 347, 365, 388, and 389 each coordinate NAD(+).

This sequence belongs to the AgrE/ArgZ ornithine cyclodeaminase family. It depends on NAD(+) as a cofactor.

The catalysed reaction is L-ornithine = L-proline + NH4(+). In terms of biological role, catalyzes the conversion of ornithine to proline, with the release of ammonia. This is Ornithine cyclodeaminase from Archaeoglobus fulgidus (strain ATCC 49558 / DSM 4304 / JCM 9628 / NBRC 100126 / VC-16).